The sequence spans 135 residues: ATP synthase epsilon chain, chloroplastic (135 aa).

This sequence belongs to the ATPase epsilon chain family. In terms of assembly, F-type ATPases have 2 components, CF(1) - the catalytic core - and CF(0) - the membrane proton channel. CF(1) has five subunits: alpha(3), beta(3), gamma(1), delta(1), epsilon(1). CF(0) has three main subunits: a, b and c.

The protein localises to the plastid. It is found in the chloroplast thylakoid membrane. In terms of biological role, produces ATP from ADP in the presence of a proton gradient across the membrane. The chain is ATP synthase epsilon chain, chloroplastic from Euglena gracilis.